The following is a 219-amino-acid chain: PKHD-type hydroxylase SYNPCC7002_A2658 (219 aa).

The 95-residue stretch at 78–172 (TVHTLLFSRY…RLVAVGWVQS (95 aa)) folds into the Fe2OG dioxygenase domain. His-96, Asp-98, and His-153 together coordinate Fe cation. 2-oxoglutarate is bound at residue Arg-163.

Fe(2+) serves as cofactor. Requires L-ascorbate as cofactor.

The chain is PKHD-type hydroxylase SYNPCC7002_A2658 from Picosynechococcus sp. (strain ATCC 27264 / PCC 7002 / PR-6) (Agmenellum quadruplicatum).